An 88-amino-acid polypeptide reads, in one-letter code: Chaplin-F (88 aa).

The signal sequence occupies residues 1–36 (MYNPKEHFSMSRIAKGLALTSVAAAAVAGTAGVAAA). The Chaplin domain occupies 47 to 87 (SPGVLSGNVVQVPVHIPVNVCGNTIDVIGLLNPAFGNECEN). Cysteine 67 and cysteine 85 are joined by a disulfide.

The protein belongs to the chaplin family. Short chaplin subfamily. In terms of assembly, homodimer; disulfide linked. About 20% of ChpF isolated from cell wall forms disulfide-bonded homodimers.

It localises to the cell surface. The protein resides in the secreted. It is found in the cell wall. Its subcellular location is the fimbrium. Functionally, one of 8 partially redundant surface-active proteins required for efficient formation of aerial mycelium; the short chaplins assemble into a hydrophobic, amyloidal fibrillar surface layer that envelopes and protects aerial hyphae and spores, presumably anchored to the long chaplins. Chaplins have an overlapping function with the surface-active SapB peptide; chaplins are essential on minimal medium while on rich medium both chaplins and SapB are required for efficient aerial hyphae formation. Chaplins are also involved in cell attachment to a hydrophobic surface. Forms amyloid fibrils in vitro probably composed of stacked beta-sheets, at low extracellular concentrations individually restores the ability to form aerial hyphae to a chaplin-deficient strain. A small chaplin extract (ChpD, ChpE, ChpF, ChpG and ChpH) self-assembles into 2 different amyloids; small fibrils at the air-water interface form an amphipathic membrane that resembles spore-surface structures involved in aerial hyphae formation, and hydrophilic fibrils in solution that resemble the fibers that attach cells to a hydrophobic surface. At the air-water interface the hydrophilic surface is in contact with water (probably equivalent to the peptidoglycan layer), while the hydrophobic face is exposed to the air, making the surface of the aerial hyphae hydrophobic. A small chaplin extract applied to a chaplin-deficient strain restores aerial hyphae formation. The small chaplin extract forms an amyloid-like structure similar to that seen on the surface of cells without rodlets (rdlA-rdlB deletions), and is highly surface active, reducing surface tension from 72 to 26 mJ/m(2), which probably allows escape of hyphae from an aqueous environment into air. ChpF alone is less surface active at pH 3.0 than at pH 10.0, it reduces the surface tension of water from 72.8 mN/m to 50 mN/m at pH 3.0 or to 37 mN/m at pH 10.0. ChpF and ChpG are sufficient to restore the rodlet layer and hydrophobicity to a strain deleted for the other 6 chaplin genes. This chain is Chaplin-F, found in Streptomyces coelicolor (strain ATCC BAA-471 / A3(2) / M145).